Here is a 466-residue protein sequence, read N- to C-terminus: tRNA-2-methylthio-N(6)-dimethylallyladenosine synthase (466 aa).

An MTTase N-terminal domain is found at 5–125 (RKLHIKSYGC…LPELLARAGR (121 aa)). [4Fe-4S] cluster-binding residues include Cys-14, Cys-50, Cys-88, Cys-166, Cys-170, and Cys-173. One can recognise a Radical SAM core domain in the interval 152 to 384 (RARGVSAFVT…QSLIDSQQAA (233 aa)). The TRAM domain occupies 387–449 (KAAIGTVVDV…RYSLLGELVA (63 aa)).

The protein belongs to the methylthiotransferase family. MiaB subfamily. In terms of assembly, monomer. Requires [4Fe-4S] cluster as cofactor.

It localises to the cytoplasm. It carries out the reaction N(6)-dimethylallyladenosine(37) in tRNA + (sulfur carrier)-SH + AH2 + 2 S-adenosyl-L-methionine = 2-methylsulfanyl-N(6)-dimethylallyladenosine(37) in tRNA + (sulfur carrier)-H + 5'-deoxyadenosine + L-methionine + A + S-adenosyl-L-homocysteine + 2 H(+). In terms of biological role, catalyzes the methylthiolation of N6-(dimethylallyl)adenosine (i(6)A), leading to the formation of 2-methylthio-N6-(dimethylallyl)adenosine (ms(2)i(6)A) at position 37 in tRNAs that read codons beginning with uridine. This Bradyrhizobium sp. (strain BTAi1 / ATCC BAA-1182) protein is tRNA-2-methylthio-N(6)-dimethylallyladenosine synthase.